The chain runs to 43 residues: Plasma membrane ATPase proteolipid 2 (43 aa).

A propeptide spanning residues 1-5 is cleaved from the precursor; the sequence is MLMST. The helical transmembrane segment at 9 to 29 threads the bilayer; that stretch reads GVILVFILVGLACIAIISTII. At 30–43 the chain is on the cytoplasmic side; the sequence is YRKWQARQRGLQRF.

Monomer and homodimer. Associated with the 100 kDa subunit of the plasma membrane H(+)-ATPase.

The protein resides in the cell membrane. In Saccharomyces cerevisiae (strain ATCC 204508 / S288c) (Baker's yeast), this protein is Plasma membrane ATPase proteolipid 2 (PMP2).